A 912-amino-acid polypeptide reads, in one-letter code: Protein transport protein SEC24-2 (912 aa).

The span at 1–11 (MSNPSRPKKRV) shows a compositional bias: basic residues. Disordered regions lie at residues 1 to 83 (MSNP…QQIS) and 102 to 129 (PNAYYQPNNGNNIQPTGENKPSLTPGRP). 3 stretches are compositionally biased toward polar residues: residues 33-45 (SGQTMQSQVSGSA), 53-74 (GQFTQPMNASDAQNQPQFMTPA), and 106-129 (YQPNNGNNIQPTGENKPSLTPGRP). Cys226, Cys229, Cys248, and Cys251 together coordinate Zn(2+). A zinc finger-like region spans residues 226 to 251 (CRRCRGYLNPFVKILQVESKWRCNFC).

It belongs to the SEC23/SEC24 family. SEC24 subfamily. The COPII coat is composed of at least 5 proteins: the SEC23/24 complex, the SEC13/31 complex, and the protein SAR1. Golgi apparatus membrane; Peripheral membrane protein; Cytoplasmic side.

It localises to the cytoplasm. The protein resides in the cytoplasmic vesicle. Its subcellular location is the COPII-coated vesicle membrane. It is found in the endoplasmic reticulum membrane. The protein localises to the golgi apparatus membrane. In terms of biological role, component of the coat protein complex II (COPII) which promotes the formation of transport vesicles from the endoplasmic reticulum (ER). The coat has two main functions, the physical deformation of the endoplasmic reticulum membrane into vesicles and the selection of cargo molecules. This is Protein transport protein SEC24-2 (SEC242) from Naumovozyma castellii (Yeast).